Here is a 291-residue protein sequence, read N- to C-terminus: MTTLAIDIGGTKLAAALIDKNLRISQRRELPTPASKTPDALREALKALVEPLRAEARQVAIASTGIIQEGMLLALNPHNLGGLLHFPLVQTLETIAGLPTLAVNDAQAAAWAEYHALPDDIRDMVFITVSTGVGGGVVCDCKLLTGKGGLAGHLGHTLADPHGPVCGCGRVGCVEAIASGRGMAAAARDDLAGCDAKTLFIRAGEGHQQARHLVSQSAQVIARMIADVKATTDCQCVVIGGSVGLAEGYLEQVRAFLMQEPAPYHVALSAARYRHDAGLLGAALLAQGDTL.

Residues 5-12 (AIDIGGTK) and 132-139 (GVGGGVVC) each bind ATP. Zn(2+) contacts are provided by histidine 156, cysteine 166, cysteine 168, and cysteine 173.

This sequence belongs to the ROK (NagC/XylR) family. NanK subfamily. As to quaternary structure, homodimer.

The enzyme catalyses an N-acyl-D-mannosamine + ATP = an N-acyl-D-mannosamine 6-phosphate + ADP + H(+). It participates in amino-sugar metabolism; N-acetylneuraminate degradation; D-fructose 6-phosphate from N-acetylneuraminate: step 2/5. Catalyzes the phosphorylation of N-acetylmannosamine (ManNAc) to ManNAc-6-P. In Salmonella gallinarum (strain 287/91 / NCTC 13346), this protein is N-acetylmannosamine kinase.